A 120-amino-acid chain; its full sequence is MFLVSKYNYFWIFLLIASLIPTIAFSISRVIAPISKGPEKFTSYECGIEPMGDAWIQFQIRYYMFALVFVIFDVETVFLYPWAMSFKQLGIPAFIEVFIFVFILIIGLIYAWRKGALEWS.

A run of 3 helical transmembrane segments spans residues Y7–I27, M64–M84, and L89–I109.

Belongs to the complex I subunit 3 family. In terms of assembly, NDH is composed of at least 16 different subunits, 5 of which are encoded in the nucleus.

It is found in the plastid. The protein resides in the chloroplast thylakoid membrane. It catalyses the reaction a plastoquinone + NADH + (n+1) H(+)(in) = a plastoquinol + NAD(+) + n H(+)(out). The enzyme catalyses a plastoquinone + NADPH + (n+1) H(+)(in) = a plastoquinol + NADP(+) + n H(+)(out). Its function is as follows. NDH shuttles electrons from NAD(P)H:plastoquinone, via FMN and iron-sulfur (Fe-S) centers, to quinones in the photosynthetic chain and possibly in a chloroplast respiratory chain. The immediate electron acceptor for the enzyme in this species is believed to be plastoquinone. Couples the redox reaction to proton translocation, and thus conserves the redox energy in a proton gradient. In Anthoceros angustus (Hornwort), this protein is NAD(P)H-quinone oxidoreductase subunit 3, chloroplastic.